The following is a 76-amino-acid chain: Sec-independent protein translocase protein TatA (76 aa).

A helical membrane pass occupies residues 1–21 (MGGLSIWHWLIVLLIVALVFG). The segment at 40 to 76 (KDGMKEGETPADAQQLPRSGAVDVNAKETTRSDSNKA) is disordered. Residues 64–76 (NAKETTRSDSNKA) show a composition bias toward basic and acidic residues.

This sequence belongs to the TatA/E family. The Tat system comprises two distinct complexes: a TatABC complex, containing multiple copies of TatA, TatB and TatC subunits, and a separate TatA complex, containing only TatA subunits. Substrates initially bind to the TatABC complex, which probably triggers association of the separate TatA complex to form the active translocon.

It localises to the cell inner membrane. Part of the twin-arginine translocation (Tat) system that transports large folded proteins containing a characteristic twin-arginine motif in their signal peptide across membranes. TatA could form the protein-conducting channel of the Tat system. The chain is Sec-independent protein translocase protein TatA from Burkholderia cenocepacia (strain HI2424).